The sequence spans 1401 residues: Lysine-specific demethylase 6A (1401 aa).

Residues methionine 1 to lysine 1095 are interaction with SUPT6H. TPR repeat units lie at residues serine 93 to tyrosine 126, alanine 130 to phenylalanine 163, histidine 170 to proline 199, alanine 205 to serine 238, glycine 250 to serine 283, glycine 284 to serine 317, alanine 318 to histidine 351, and alanine 352 to serine 385. Residues alanine 437–tryptophan 449 show a composition bias toward polar residues. The segment at alanine 437–histidine 457 is disordered. Arginine 519 is modified (omega-N-methylarginine). The disordered stretch occupies residues threonine 521 to glutamine 541. Arginine 549 carries the post-translational modification Omega-N-methylarginine. 2 stretches are compositionally biased toward polar residues: residues leucine 624 to alanine 652 and leucine 660 to isoleucine 724. Disordered stretches follow at residues leucine 624–glycine 746, alanine 758–proline 778, lysine 810–serine 864, leucine 914–threonine 940, and phenylalanine 1043–phenylalanine 1079. Phosphoserine is present on serine 769. Over residues serine 814–threonine 833 the composition is skewed to low complexity. Threonine 827 bears the Phosphothreonine mark. Residue serine 829 is modified to Phosphoserine. Over residues glutamate 834–histidine 848 the composition is skewed to polar residues. Residues cysteine 918–leucine 931 show a composition bias toward pro residues. Basic and acidic residues predominate over residues serine 1046–serine 1063. Residues lysine 1095–tryptophan 1258 enclose the JmjC domain. Histidine 1146, glutamate 1148, and histidine 1226 together coordinate Fe cation. Zn(2+)-binding residues include cysteine 1331, cysteine 1334, cysteine 1358, and cysteine 1361.

Belongs to the UTX family. As to quaternary structure, interacts with TLE1. Component of the MLL2/3 complex (also named ASCOM complex), at least composed of KMT2D/MLL2 or KMT2C/MLL3, ASH2L, RBBP5, WDR5, NCOA6, DPY30, KDM6A (or KDM6B), PAXIP1/PTIP, PAGR1 and alpha- and beta-tubulin. Interacts with SUPT6H. Interacts with SMARCA4. Interacts with PROSER1. Requires L-ascorbate as cofactor. Fe(2+) is required as a cofactor.

The protein resides in the nucleus. It carries out the reaction N(6),N(6),N(6)-trimethyl-L-lysyl(27)-[histone H3] + 2 2-oxoglutarate + 2 O2 = N(6)-methyl-L-lysyl(27)-[histone H3] + 2 formaldehyde + 2 succinate + 2 CO2. Functionally, histone demethylase that specifically demethylates 'Lys-27' of histone H3, thereby playing a central role in histone code. Demethylates trimethylated and dimethylated but not monomethylated H3 'Lys-27'. Plays a central role in regulation of posterior development, by regulating HOX gene expression. Demethylation of 'Lys-27' of histone H3 is concomitant with methylation of 'Lys-4' of histone H3, and regulates the recruitment of the PRC1 complex and monoubiquitination of histone H2A. Plays a demethylase-independent role in chromatin remodeling to regulate T-box family member-dependent gene expression. This Homo sapiens (Human) protein is Lysine-specific demethylase 6A (KDM6A).